A 223-amino-acid chain; its full sequence is Deoxyribose-phosphate aldolase 2 (223 aa).

Asp-89 functions as the Proton donor/acceptor in the catalytic mechanism. The active-site Schiff-base intermediate with acetaldehyde is Lys-152. Residue Lys-181 is the Proton donor/acceptor of the active site.

It belongs to the DeoC/FbaB aldolase family. DeoC type 1 subfamily.

Its subcellular location is the cytoplasm. It carries out the reaction 2-deoxy-D-ribose 5-phosphate = D-glyceraldehyde 3-phosphate + acetaldehyde. The protein operates within carbohydrate degradation; 2-deoxy-D-ribose 1-phosphate degradation; D-glyceraldehyde 3-phosphate and acetaldehyde from 2-deoxy-alpha-D-ribose 1-phosphate: step 2/2. Catalyzes a reversible aldol reaction between acetaldehyde and D-glyceraldehyde 3-phosphate to generate 2-deoxy-D-ribose 5-phosphate. The chain is Deoxyribose-phosphate aldolase 2 from Bacillus licheniformis (strain ATCC 14580 / DSM 13 / JCM 2505 / CCUG 7422 / NBRC 12200 / NCIMB 9375 / NCTC 10341 / NRRL NRS-1264 / Gibson 46).